The following is a 262-amino-acid chain: 5'-nucleotidase SurE (262 aa).

A divalent metal cation-binding residues include D13, D14, S44, and N97.

The protein belongs to the SurE nucleotidase family. Requires a divalent metal cation as cofactor.

It is found in the cytoplasm. It catalyses the reaction a ribonucleoside 5'-phosphate + H2O = a ribonucleoside + phosphate. Its function is as follows. Nucleotidase that shows phosphatase activity on nucleoside 5'-monophosphates. The sequence is that of 5'-nucleotidase SurE from Myxococcus xanthus (strain DK1622).